A 234-amino-acid polypeptide reads, in one-letter code: Glycoprotein BDLF3 (234 aa).

Residues 1 to 28 (MAHARDKAGAVMAMILICETSLIWTSSG) form the signal peptide. Residues 29–62 (SSTASAGNVTGTTAVTTPSPSASGPSTNQSTTLT) form a disordered region. Asn36, Asn56, Asn77, Asn96, Asn101, Asn110, Asn127, Asn144, and Asn159 each carry an N-linked (GlcNAc...) asparagine; by host glycan. A disordered region spans residues 116-138 (AGTGTSTGVTSNVTTRSSSTTSA). The chain crosses the membrane as a helical span at residues 187 to 207 (LVFVGLTFLMLILIFAAGLMM).

Belongs to the Epstein-Barr virus BDLF3 protein family.

It is found in the membrane. The chain is Glycoprotein BDLF3 from Homo sapiens (Human).